A 309-amino-acid chain; its full sequence is Homoserine O-succinyltransferase (309 aa).

Cys-142 functions as the Acyl-thioester intermediate in the catalytic mechanism. Substrate contacts are provided by Lys-163 and Ser-192. The Proton acceptor role is filled by His-235. Glu-237 is an active-site residue. Arg-249 contacts substrate.

The protein belongs to the MetA family. Homodimer.

It localises to the cytoplasm. It catalyses the reaction L-homoserine + succinyl-CoA = O-succinyl-L-homoserine + CoA. Its pathway is amino-acid biosynthesis; L-methionine biosynthesis via de novo pathway; O-succinyl-L-homoserine from L-homoserine: step 1/1. Transfers a succinyl group from succinyl-CoA to L-homoserine, forming succinyl-L-homoserine. The polypeptide is Homoserine O-succinyltransferase (Shigella sonnei (strain Ss046)).